We begin with the raw amino-acid sequence, 152 residues long: Cytochrome c-type biogenesis protein CcmE 2 (152 aa).

The Cytoplasmic segment spans residues 1–8; it reads MNPQRRRR. A helical; Signal-anchor for type II membrane protein transmembrane segment spans residues 9–29; the sequence is LWLVLALVLAGGLATTLVAMA. The Periplasmic portion of the chain corresponds to 30–152; sequence LQRNVAYLYT…HQVAPAKVTQ (123 aa). Heme contacts are provided by histidine 123 and tyrosine 127.

Belongs to the CcmE/CycJ family.

The protein localises to the cell inner membrane. In terms of biological role, heme chaperone required for the biogenesis of c-type cytochromes. Transiently binds heme delivered by CcmC and transfers the heme to apo-cytochromes in a process facilitated by CcmF and CcmH. The sequence is that of Cytochrome c-type biogenesis protein CcmE 2 from Xanthomonas campestris pv. campestris (strain 8004).